The primary structure comprises 200 residues: Glycerol-3-phosphate acyltransferase (200 aa).

5 helical membrane-spanning segments follow: residues 6–26 (LTLG…AVLV), 56–76 (SAAM…YIAF), 82–102 (QVAL…PIFF), 118–138 (APIG…MVLI), and 141–161 (YSSL…WFLD).

Belongs to the PlsY family. As to quaternary structure, probably interacts with PlsX.

It localises to the cell inner membrane. The catalysed reaction is an acyl phosphate + sn-glycerol 3-phosphate = a 1-acyl-sn-glycero-3-phosphate + phosphate. It functions in the pathway lipid metabolism; phospholipid metabolism. Catalyzes the transfer of an acyl group from acyl-phosphate (acyl-PO(4)) to glycerol-3-phosphate (G3P) to form lysophosphatidic acid (LPA). This enzyme utilizes acyl-phosphate as fatty acyl donor, but not acyl-CoA or acyl-ACP. The protein is Glycerol-3-phosphate acyltransferase of Shewanella sediminis (strain HAW-EB3).